We begin with the raw amino-acid sequence, 357 residues long: Phospho-N-acetylmuramoyl-pentapeptide-transferase (357 aa).

Helical transmembrane passes span 23–43, 70–90, 91–111, 127–147, 171–191, 196–216, 236–256, 260–280, 286–306, and 334–354; these read AIFSLLTSFFINLYIGPYFIY, TMGGIFIIFSILFSTILYCNL, SNIYIWYVISILIGYGLIGFI, LKWKYFFLSIIAFIFICMIKI, YLYIFLSYFVLVGTSNAVNLT, GLAIMPVIFLTCGLTLISLFS, LAILCMAIVGSGLGFLWFNSY, VFMGDVGSLALGGSLGAIAIL, LLIIMGGIFVFETISVILQII, and LIIVRFWIVSLILLLISLISL.

This sequence belongs to the glycosyltransferase 4 family. MraY subfamily. Mg(2+) is required as a cofactor.

Its subcellular location is the cell inner membrane. The enzyme catalyses UDP-N-acetyl-alpha-D-muramoyl-L-alanyl-gamma-D-glutamyl-meso-2,6-diaminopimeloyl-D-alanyl-D-alanine + di-trans,octa-cis-undecaprenyl phosphate = di-trans,octa-cis-undecaprenyl diphospho-N-acetyl-alpha-D-muramoyl-L-alanyl-D-glutamyl-meso-2,6-diaminopimeloyl-D-alanyl-D-alanine + UMP. It participates in cell wall biogenesis; peptidoglycan biosynthesis. Functionally, catalyzes the initial step of the lipid cycle reactions in the biosynthesis of the cell wall peptidoglycan: transfers peptidoglycan precursor phospho-MurNAc-pentapeptide from UDP-MurNAc-pentapeptide onto the lipid carrier undecaprenyl phosphate, yielding undecaprenyl-pyrophosphoryl-MurNAc-pentapeptide, known as lipid I. The polypeptide is Phospho-N-acetylmuramoyl-pentapeptide-transferase (Buchnera aphidicola subsp. Acyrthosiphon pisum (strain 5A)).